Consider the following 61-residue polypeptide: Large ribosomal subunit protein uL29 (61 aa).

Belongs to the universal ribosomal protein uL29 family.

In Campylobacter curvus (strain 525.92), this protein is Large ribosomal subunit protein uL29.